The chain runs to 248 residues: 14-3-3 protein sigma (248 aa).

3 positions are modified to phosphoserine: serine 5, serine 74, and serine 248.

This sequence belongs to the 14-3-3 family. As to quaternary structure, homodimer. Interacts with KRT17 and SAMSN1. Found in a complex with XPO7, EIF4A1, ARHGAP1, VPS26A, VPS29 and VPS35. Interacts with GAB2. Interacts with SRPK2. Interacts with COPS6. Interacts with COP1; this interaction leads to proteasomal degradation. Interacts with the 'Thr-369' phosphorylated form of DAPK2. Interacts with PI4KB. Interacts with SLITRK1. Interacts with LRRK2; this interaction is dependent on LRRK2 phosphorylation. Interacts with PKP3 (via N-terminus); the interaction maintains the cytoplasmic pool of PKP3, facilitates PKP3 exchange at desmosomes and restricts PKP3 localization to existing desmosome cell junctions. Interacts with LCP2. Post-translationally, ubiquitinated. Ubiquitination by RFFL induces proteasomal degradation and indirectly regulates p53/TP53 activation. Present mainly in tissues enriched in stratified squamous keratinizing epithelium.

The protein localises to the cytoplasm. It localises to the nucleus. Its subcellular location is the secreted. Adapter protein implicated in the regulation of a large spectrum of both general and specialized signaling pathways. Binds to a large number of partners, usually by recognition of a phosphoserine or phosphothreonine motif. Binding generally results in the modulation of the activity of the binding partner. Promotes cytosolic retention of GBP1 GTPase by binding to phosphorylated GBP1, thereby inhibiting the innate immune response. Also acts as a TP53/p53-regulated inhibitor of G2/M progression. When bound to KRT17, regulates protein synthesis and epithelial cell growth by stimulating Akt/mTOR pathway. Acts to maintain desmosome cell junction adhesion in epithelial cells via interacting with and sequestering PKP3 to the cytoplasm, thereby restricting its translocation to existing desmosome structures and therefore maintaining desmosome protein homeostasis. Also acts to facilitate PKP3 exchange at desmosome plaques, thereby maintaining keratinocyte intercellular adhesion. May also regulate MDM2 autoubiquitination and degradation and thereby activate p53/TP53. In Homo sapiens (Human), this protein is 14-3-3 protein sigma (SFN).